The primary structure comprises 385 residues: MAIVIVGAGTAGVNAAFWLRQYGYKGGIRLLSRESVTPYQRPPLSKAFLTSETAESAIPLKPESFYTNNNISISLNTQIVSIDVGRKVVAAKDGEEYAYEKLILATGASARRLTCEGSELSGVCYLRSMEDAKNLRRKLVESASVVVLGGGVIGLEVASAAVGIGRRVTVIEAAPRVMARVVTPAAANLVRARLEAEGVGFKLNAKLTSIKGRNGHVNQCVLESGEKIQADLIIVGIGAIPELELATEAALEVSNGVVVDDQMRTSDTSIYAIGDCALARNLFFGTMVRLETIHNAVTQAQIVASSICGTSTPAPTPPRFWSDLKGMTLQGLGALKDYDKLVVAINNETVELEVLAYKQERLIATETINLPKRQGALGGSIKLPD.

FAD contacts are provided by residues 8-11, 32-33, Ile-79, Glu-156, Asp-275, and Ile-293; these read AGTA and SR.

It belongs to the FAD-dependent oxidoreductase family. In terms of assembly, homodimer. FAD serves as cofactor.

It is found in the cytoplasm. It carries out the reaction 2 reduced [rubredoxin] + NAD(+) + H(+) = 2 oxidized [rubredoxin] + NADH. The protein operates within hydrocarbon metabolism; alkane degradation. Its function is as follows. Involved in the hydrocarbon hydroxylating system, which transfers electrons from NADH to rubredoxin reductase and then through rubredoxin to alkane 1 monooxygenase. The protein is Rubredoxin-NAD(+) reductase (alkT) of Pseudomonas putida (Arthrobacter siderocapsulatus).